Consider the following 148-residue polypeptide: Large ribosomal subunit protein bL9 (148 aa).

The protein belongs to the bacterial ribosomal protein bL9 family.

Functionally, binds to the 23S rRNA. The polypeptide is Large ribosomal subunit protein bL9 (Methylococcus capsulatus (strain ATCC 33009 / NCIMB 11132 / Bath)).